The sequence spans 147 residues: Nucleoside diphosphate kinase (147 aa).

Positions 9, 57, 85, 91, 102, and 112 each coordinate ATP. Residue His-115 is the Pros-phosphohistidine intermediate of the active site.

This sequence belongs to the NDK family. As to quaternary structure, homotetramer. The cofactor is Mg(2+).

It localises to the cytoplasm. It carries out the reaction a 2'-deoxyribonucleoside 5'-diphosphate + ATP = a 2'-deoxyribonucleoside 5'-triphosphate + ADP. The catalysed reaction is a ribonucleoside 5'-diphosphate + ATP = a ribonucleoside 5'-triphosphate + ADP. Functionally, major role in the synthesis of nucleoside triphosphates other than ATP. The ATP gamma phosphate is transferred to the NDP beta phosphate via a ping-pong mechanism, using a phosphorylated active-site intermediate. This Kosmotoga olearia (strain ATCC BAA-1733 / DSM 21960 / TBF 19.5.1) protein is Nucleoside diphosphate kinase.